The chain runs to 389 residues: S-adenosylmethionine synthase (389 aa).

H17 serves as a coordination point for ATP. D19 is a binding site for Mg(2+). E45 serves as a coordination point for K(+). Positions 58 and 101 each coordinate L-methionine. The tract at residues 101-111 (QSPDIGQGVDV) is flexible loop. Residues 160–162 (DGK), 226–227 (RF), D235, 241–242 (RK), A258, and K262 contribute to the ATP site. D235 serves as a coordination point for L-methionine. K266 lines the L-methionine pocket.

This sequence belongs to the AdoMet synthase family. In terms of assembly, homotetramer; dimer of dimers. The cofactor is Mg(2+). It depends on K(+) as a cofactor.

The protein localises to the cytoplasm. It catalyses the reaction L-methionine + ATP + H2O = S-adenosyl-L-methionine + phosphate + diphosphate. It participates in amino-acid biosynthesis; S-adenosyl-L-methionine biosynthesis; S-adenosyl-L-methionine from L-methionine: step 1/1. Catalyzes the formation of S-adenosylmethionine (AdoMet) from methionine and ATP. The overall synthetic reaction is composed of two sequential steps, AdoMet formation and the subsequent tripolyphosphate hydrolysis which occurs prior to release of AdoMet from the enzyme. The protein is S-adenosylmethionine synthase of Anaeromyxobacter sp. (strain Fw109-5).